A 324-amino-acid polypeptide reads, in one-letter code: Cytochrome c biogenesis protein CcsA (324 aa).

Transmembrane regions (helical) follow at residues Phe15–Ile35, Gly44–Gly64, Leu71–Phe91, Leu98–Leu118, Met143–Leu163, Val228–Asn248, Trp255–Leu275, and Ala289–Leu309.

Belongs to the CcmF/CycK/Ccl1/NrfE/CcsA family. In terms of assembly, may interact with Ccs1.

Its subcellular location is the plastid. The protein resides in the chloroplast thylakoid membrane. Required during biogenesis of c-type cytochromes (cytochrome c6 and cytochrome f) at the step of heme attachment. This chain is Cytochrome c biogenesis protein CcsA, found in Daucus carota (Wild carrot).